A 223-amino-acid chain; its full sequence is Octanoyltransferase (223 aa).

The 186-residue stretch at 31 to 216 (GQIGDTLLLL…QIGEVFALEP (186 aa)) folds into the BPL/LPL catalytic domain. Substrate-binding positions include 76–83 (RGGEVTYH), 145–147 (AIG), and 159–161 (GLA). The Acyl-thioester intermediate role is filled by Cys-177.

This sequence belongs to the LipB family.

It is found in the cytoplasm. It catalyses the reaction octanoyl-[ACP] + L-lysyl-[protein] = N(6)-octanoyl-L-lysyl-[protein] + holo-[ACP] + H(+). It functions in the pathway protein modification; protein lipoylation via endogenous pathway; protein N(6)-(lipoyl)lysine from octanoyl-[acyl-carrier-protein]: step 1/2. In terms of biological role, catalyzes the transfer of endogenously produced octanoic acid from octanoyl-acyl-carrier-protein onto the lipoyl domains of lipoate-dependent enzymes. Lipoyl-ACP can also act as a substrate although octanoyl-ACP is likely to be the physiological substrate. In Chloroflexus aurantiacus (strain ATCC 29366 / DSM 635 / J-10-fl), this protein is Octanoyltransferase.